The chain runs to 1375 residues: DNA-directed RNA polymerase subunit beta (1375 aa).

Belongs to the RNA polymerase beta chain family. The RNAP catalytic core consists of 2 alpha, 1 beta, 1 beta' and 1 omega subunit. When a sigma factor is associated with the core the holoenzyme is formed, which can initiate transcription.

It catalyses the reaction RNA(n) + a ribonucleoside 5'-triphosphate = RNA(n+1) + diphosphate. Functionally, DNA-dependent RNA polymerase catalyzes the transcription of DNA into RNA using the four ribonucleoside triphosphates as substrates. This chain is DNA-directed RNA polymerase subunit beta, found in Coxiella burnetii (strain CbuG_Q212) (Coxiella burnetii (strain Q212)).